The sequence spans 1184 residues: DNA-directed RNA polymerase subunit beta (1184 aa).

Residues 1160–1184 (DDDFTNQNDAFNIVQPENAATEKTE) are disordered.

This sequence belongs to the RNA polymerase beta chain family. The RNAP catalytic core consists of 2 alpha, 1 beta, 1 beta' and 1 omega subunit. When a sigma factor is associated with the core the holoenzyme is formed, which can initiate transcription.

It carries out the reaction RNA(n) + a ribonucleoside 5'-triphosphate = RNA(n+1) + diphosphate. Its function is as follows. DNA-dependent RNA polymerase catalyzes the transcription of DNA into RNA using the four ribonucleoside triphosphates as substrates. This chain is DNA-directed RNA polymerase subunit beta, found in Listeria innocua serovar 6a (strain ATCC BAA-680 / CLIP 11262).